A 626-amino-acid polypeptide reads, in one-letter code: SHC-transforming protein 4 (626 aa).

The tract at residues 1–185 (MRERSQDSQA…KQDGPPLQHL (185 aa)) is CH2. Disordered regions lie at residues 38–76 (ITSLDEGSPGGSVGNKGSSPPPYPALAPHLPTEDATVSS) and 119–182 (LQEN…GPPL). Residues 120–139 (QENQDQTPSRPASPESNLNR) are compositionally biased toward polar residues. Residues 186–369 (LGNGLNYCVR…LVDGAPEDRD (184 aa)) enclose the PID domain. Positions 370-521 (HDYYNSIPGK…HIRQQLWDEE (152 aa)) are CH1. Position 422 is a phosphotyrosine (Tyr-422). The SH2 domain occupies 522 to 613 (CFHGKLSRGA…GSEVRLKQPI (92 aa)).

Interacts (via PID domain) with phosphorylated MUSK (via NPXY motif); undergoes tyrosine phosphorylation downstream of activated MUSK. Interacts with GRB2; the interaction is dependent of Tyr-422 phosphorylation and increased by EGF. In terms of processing, phosphorylated; the phosphorylation is enhanced by EGF. Phosphorylation at Tyr-422 is required for the interaction with GRB2. Expressed in both brain and skeletal muscle; widely expressed in brain namely olfactory bulb, cortex, hippocampus, striatum, thalamus, and brain stem (at protein level). Only expressed in melanomas. Weakly expressed in normal melanocytes and benign nevi. Highly expressed at the transition from radial growth phase to vertical growth phase and metastatic melanomas, when tumor cells acquire migratory competence and invasive potential.

It localises to the postsynaptic cell membrane. In terms of biological role, activates both Ras-dependent and Ras-independent migratory pathways in melanomas. Contributes to the early phases of agrin-induced tyrosine phosphorylation of CHRNB1. The protein is SHC-transforming protein 4 (Shc4) of Mus musculus (Mouse).